The sequence spans 28 residues: Trypsin inhibitor 4 (28 aa).

Cystine bridges form between C2–C19, C9–C21, and C15–C27.

Belongs to the protease inhibitor I7 (squash-type serine protease inhibitor) family.

It is found in the secreted. Its function is as follows. Inhibits trypsin. This Luffa aegyptiaca (Sponge gourd) protein is Trypsin inhibitor 4.